A 243-amino-acid polypeptide reads, in one-letter code: DNA repair protein RecO (243 aa).

The protein belongs to the RecO family.

Functionally, involved in DNA repair and RecF pathway recombination. The chain is DNA repair protein RecO from Vibrio parahaemolyticus serotype O3:K6 (strain RIMD 2210633).